The following is a 186-amino-acid chain: Putative manganese efflux pump MntP (186 aa).

6 consecutive transmembrane segments (helical) span residues 1 to 21 (MSFLTNFLLGLGLAMDAFAVS), 39 to 59 (LAVFFGSFQAMMPVLGWIGGS), 61 to 81 (VSSFVSDYAPWIAFLLLAFIG), 102 to 122 (YSVLFLLAVATSIDALAVGMS), 134 to 156 (VIIIGCVTFVMSFCGAILGYRLG), and 165 to 185 (ILGGLILIGLGGKILAEHMLW).

The protein belongs to the MntP (TC 9.B.29) family.

Its subcellular location is the cell membrane. Its function is as follows. Probably functions as a manganese efflux pump. In Methanosarcina acetivorans (strain ATCC 35395 / DSM 2834 / JCM 12185 / C2A), this protein is Putative manganese efflux pump MntP.